Reading from the N-terminus, the 477-residue chain is Tripartite motif-containing protein 72 (477 aa).

Zn(2+) is bound by residues Cys-14, Cys-17, Cys-29, His-31, Cys-34, Cys-37, Cys-53, Cys-56, Cys-86, His-89, Cys-97, Asp-100, Cys-105, Cys-108, His-114, and His-117. An RING-type zinc finger spans residues 14-57; it reads CPLCLQLFDAPVTAECGHSFCRACLSRVAGEPAADGTVNCPCCQ. The B box-type zinc-finger motif lies at 81–122; that stretch reads VPQGHCEEHLDPLSIYCEQDRVLVCGVCASLGSHRGHRLLPA. Residues 135 to 232 adopt a coiled-coil conformation; sequence QQKLQLQEAS…EKVLEEVADK (98 aa). Ser-255 is modified (phosphoserine). The B30.2/SPRY domain occupies 271-475; the sequence is DFKFQVWRKM…PLLLVGPDGQ (205 aa).

The protein belongs to the TRIM/RBCC family. As to quaternary structure, homodimer. Homooligomer; disulfide-linked. Oligomerizes on the phospholipid membrane. Interacts with DYSF and CAV3. In terms of processing, disulfide bond formation at Cys-242 occurs in case of membrane damage that cause the entry of the oxidized milieu of the extracellular space, resulting in homooligomerization. Muscle-specific.

The protein localises to the cell membrane. Its subcellular location is the sarcolemma. The protein resides in the cytoplasmic vesicle membrane. The enzyme catalyses S-ubiquitinyl-[E2 ubiquitin-conjugating enzyme]-L-cysteine + [acceptor protein]-L-lysine = [E2 ubiquitin-conjugating enzyme]-L-cysteine + N(6)-ubiquitinyl-[acceptor protein]-L-lysine.. It participates in protein modification; protein ubiquitination. Specifically binds phosphatidylserine. The binding to phospholipids enhances ubiquitination activity. Its function is as follows. Muscle-specific E3 ubiquitin-protein ligase that plays a central role in cell membrane repair by nucleating the assembly of the repair machinery at injury sites. Its ubiquitination activity is mediated by E2 ubiquitin-conjugating enzymes UBE2D1, UBE2D2 and UBE2D3. Acts as a sensor of oxidation: upon membrane damage, entry of extracellular oxidative environment results in disulfide bond formation and homooligomerization at the injury site. This oligomerization acts as a nucleation site for recruitment of TRIM72-containing vesicles to the injury site, leading to membrane patch formation. Probably acts upstream of the Ca(2+)-dependent membrane resealing process. Required for transport of DYSF to sites of cell injury during repair patch formation. Regulates membrane budding and exocytosis. May be involved in the regulation of the mobility of KCNB1-containing endocytic vesicles. The polypeptide is Tripartite motif-containing protein 72 (Oryctolagus cuniculus (Rabbit)).